The primary structure comprises 375 residues: MPSVTISSTMLAGLLLMLVPASSAAPRPQAREDVPMRLLQDAKPAFPYDPNTIAKCSWWWDNEGQIPCANMPAEWGITMQDFLRWNPSITSSCGNFLNGRSYCVEASGEEPPVPGTPTTTTAPATTTKPSNGITTPQPIQDGMVGNCNKFHYISEGDRCQDILSYQKITLADFFKWNPAVKSDCSGLWSKTNACVGVVGQAPAVTTTTTKPATPTTPSNGITTPQPIQAGMVGNCNKFHYISEGDRCQDILSYQKITQADFFKWNPAVKSDCSGLWSKTHACVGVIGGQAPPPTPTTTKPTTTKPPGNGVTTPTPTQPGMVTNCNKFHFVSPGNTCQQIVSYQKITMANFVKWNSGAGSGCNNLWGNTHACVGVF.

A signal peptide spans 1–24 (MPSVTISSTMLAGLLLMLVPASSA). Positions 57–104 (SWWWDNEGQIPCANMPAEWGITMQDFLRWNPSITSSCGNFLNGRSYCV) constitute a LysM 1 domain. The segment at 108-139 (GEEPPVPGTPTTTTAPATTTKPSNGITTPQPI) is disordered. Low complexity predominate over residues 116-129 (TPTTTTAPATTTKP). Residues 149–195 (KFHYISEGDRCQDILSYQKITLADFFKWNPAVKSDCSGLWSKTNACV) enclose the LysM 2 domain. Over residues 206 to 217 (TTTTKPATPTTP) the composition is skewed to low complexity. The disordered stretch occupies residues 206–225 (TTTTKPATPTTPSNGITTPQ). Residues 237–283 (KFHYISEGDRCQDILSYQKITQADFFKWNPAVKSDCSGLWSKTHACV) form the LysM 3 domain. A disordered region spans residues 287-317 (GGQAPPPTPTTTKPTTTKPPGNGVTTPTPTQ). Residues 296-317 (TTTKPTTTKPPGNGVTTPTPTQ) are compositionally biased toward low complexity. The LysM 4 domain occupies 326 to 372 (KFHFVSPGNTCQQIVSYQKITMANFVKWNSGAGSGCNNLWGNTHACV).

The protein belongs to the secreted LysM effector family.

Functionally, might have a role in sequestration of chitin oligosaccharides (breakdown products of fungal cell walls that are released during invasion and act as triggers of host immunity) to dampen host defense. Does not play an important role during host colonization. This Verticillium dahliae (strain VdLs.17 / ATCC MYA-4575 / FGSC 10137) (Verticillium wilt) protein is Secreted LysM effector Vd4LysM.